The primary structure comprises 119 residues: Large ribosomal subunit protein bL20 (119 aa).

The protein belongs to the bacterial ribosomal protein bL20 family.

Its function is as follows. Binds directly to 23S ribosomal RNA and is necessary for the in vitro assembly process of the 50S ribosomal subunit. It is not involved in the protein synthesizing functions of that subunit. The protein is Large ribosomal subunit protein bL20 of Gluconacetobacter diazotrophicus (strain ATCC 49037 / DSM 5601 / CCUG 37298 / CIP 103539 / LMG 7603 / PAl5).